The primary structure comprises 67 residues: Photosystem II reaction center protein H (67 aa).

Residues 27–47 traverse the membrane as a helical segment; sequence GAVPVMAFVGVLLLVFLVILL.

This sequence belongs to the PsbH family. PSII is composed of 1 copy each of membrane proteins PsbA, PsbB, PsbC, PsbD, PsbE, PsbF, PsbH, PsbI, PsbJ, PsbK, PsbL, PsbM, PsbT, PsbX, PsbY, Psb30/Ycf12, peripheral proteins PsbO, CyanoQ (PsbQ), PsbU, PsbV and a large number of cofactors. It forms dimeric complexes.

It localises to the cellular thylakoid membrane. Its function is as follows. One of the components of the core complex of photosystem II (PSII), required for its stability and/or assembly. PSII is a light-driven water:plastoquinone oxidoreductase that uses light energy to abstract electrons from H(2)O, generating O(2) and a proton gradient subsequently used for ATP formation. It consists of a core antenna complex that captures photons, and an electron transfer chain that converts photonic excitation into a charge separation. The sequence is that of Photosystem II reaction center protein H from Prochlorococcus marinus (strain SARG / CCMP1375 / SS120).